We begin with the raw amino-acid sequence, 368 residues long: tRNA/tmRNA (uracil-C(5))-methyltransferase (368 aa).

S-adenosyl-L-methionine-binding residues include glutamine 192, tyrosine 220, asparagine 225, glutamate 241, and aspartate 301. Cysteine 326 acts as the Nucleophile in catalysis. Glutamate 360 serves as the catalytic Proton acceptor.

It belongs to the class I-like SAM-binding methyltransferase superfamily. RNA M5U methyltransferase family. TrmA subfamily.

The catalysed reaction is uridine(54) in tRNA + S-adenosyl-L-methionine = 5-methyluridine(54) in tRNA + S-adenosyl-L-homocysteine + H(+). It carries out the reaction uridine(341) in tmRNA + S-adenosyl-L-methionine = 5-methyluridine(341) in tmRNA + S-adenosyl-L-homocysteine + H(+). In terms of biological role, dual-specificity methyltransferase that catalyzes the formation of 5-methyluridine at position 54 (m5U54) in all tRNAs, and that of position 341 (m5U341) in tmRNA (transfer-mRNA). In Actinobacillus pleuropneumoniae serotype 5b (strain L20), this protein is tRNA/tmRNA (uracil-C(5))-methyltransferase.